The following is a 330-amino-acid chain: DNA-directed RNA polymerase subunit alpha (330 aa).

Residues 1–232 (MAILAFQKPE…SHFSLFAENK (232 aa)) form an alpha N-terminal domain (alpha-NTD) region. Positions 248–330 (EDSLHMRQLL…DISKYKLDKD (83 aa)) are alpha C-terminal domain (alpha-CTD).

This sequence belongs to the RNA polymerase alpha chain family. In terms of assembly, homodimer. The RNAP catalytic core consists of 2 alpha, 1 beta, 1 beta' and 1 omega subunit. When a sigma factor is associated with the core the holoenzyme is formed, which can initiate transcription.

It catalyses the reaction RNA(n) + a ribonucleoside 5'-triphosphate = RNA(n+1) + diphosphate. In terms of biological role, DNA-dependent RNA polymerase catalyzes the transcription of DNA into RNA using the four ribonucleoside triphosphates as substrates. This chain is DNA-directed RNA polymerase subunit alpha, found in Porphyromonas gingivalis (strain ATCC BAA-308 / W83).